Here is a 472-residue protein sequence, read N- to C-terminus: Argininosuccinate lyase (472 aa).

The protein belongs to the lyase 1 family. Argininosuccinate lyase subfamily.

The protein localises to the cytoplasm. The enzyme catalyses 2-(N(omega)-L-arginino)succinate = fumarate + L-arginine. It participates in amino-acid biosynthesis; L-arginine biosynthesis; L-arginine from L-ornithine and carbamoyl phosphate: step 3/3. This chain is Argininosuccinate lyase, found in Synechococcus sp. (strain CC9311).